Reading from the N-terminus, the 742-residue chain is ATP-dependent RNA helicase DBP7 (742 aa).

A disordered region spans residues 45–100 (GKTVSRKRKANTTGDEGIIPGRGENSIKKLHKESSYSSEEQEKYKGRNAHNTQGRT). The short motif at 143–172 (DQFASLGVSSLLVSHLEQKMRIKKPTSIQK) is the Q motif element. Residues 178–372 (IIGNAGKNDF…NVALKDYKLI (195 aa)) form the Helicase ATP-binding domain. 191–198 (AQTGSGKT) provides a ligand contact to ATP. Residues 307-310 (DEGD) carry the DEGD box motif. The 201-residue stretch at 405 to 605 (TLAATLNNIT…ILMPAFKDVN (201 aa)) folds into the Helicase C-terminal domain. Residues 701–726 (AMGLQSSKDGNSEKKPTKENSKNKMF) form a disordered region. Residues 710-722 (GNSEKKPTKENSK) show a composition bias toward basic and acidic residues.

The protein belongs to the DEAD box helicase family. DDX31/DBP7 subfamily.

The protein resides in the nucleus. It is found in the nucleolus. The catalysed reaction is ATP + H2O = ADP + phosphate + H(+). Functionally, ATP-binding RNA helicase involved in the biogenesis of 60S ribosomal subunits and is required for the normal formation of 25S and 5.8S rRNAs. The polypeptide is ATP-dependent RNA helicase DBP7 (DBP7) (Saccharomyces cerevisiae (strain ATCC 204508 / S288c) (Baker's yeast)).